The following is a 504-amino-acid chain: MEKFQGYLEFDGARQQSFLYPLFFREYIYVLAYDHGLNRLNRNRSIFLENADYDKKYSSLIVKRLILRMYEQNRLIIPTKDLNQNNFLGHTSLFYYQMISVLFAVIVEIPFSLRLGSSFEGNLFKKSYNLQSIHSIFPFLEDKLSHFNYVLDVVIPYPIHLEILVQTLRYRVKDASSLHFLRFCVYEYFNCKNFYIKKKSILNPRFFLFLYNSHVCEYESIFFFLRKRSSHLRSTSYEVLFERIFFYGKIQHFFKVFVNNFPAILGLLKDPFIHYVRYHGRSILATKDTPLLMNKWKYYFVNLWQCYFSVWFQSQKVHIKQLSKDNLEFLGYLSSLRLNPLVVRSQMLENSFLIDNVRIKLDSKIPISSIIGSLAKDKFCNVLGHPISKVIWTHSSDSDILNRFVRICRNISHYYSGSSKKKFLYRIKYILRLCCVKTLARKHKSTVRAFLKRLGSGLLEEFLTGEDQVLSLIFPISYYASKRLYRVRIWYLDILYLNDLANHE.

The protein belongs to the intron maturase 2 family. MatK subfamily.

The protein resides in the plastid. Its subcellular location is the chloroplast. In terms of biological role, usually encoded in the trnK tRNA gene intron. Probably assists in splicing its own and other chloroplast group II introns. The chain is Maturase K from Cardamine amara (Large bitter-cress).